The chain runs to 167 residues: CS6 fimbrial subunit B (167 aa).

Positions 1–21 (MLKKIISAIALIAGTSGVVNA) are cleaved as a signal peptide.

Its subcellular location is the fimbrium. This Escherichia coli protein is CS6 fimbrial subunit B (cssB).